The chain runs to 711 residues: Origin recognition complex subunit 3 (711 aa).

A phosphoserine mark is found at Ser-23 and Ser-516.

This sequence belongs to the ORC3 family. In terms of assembly, component of ORC, a complex composed of at least 6 subunits: ORC1, ORC2, ORC3, ORC4, ORC5 and ORC6. ORC is regulated in a cell-cycle dependent manner. It is sequentially assembled at the exit from anaphase of mitosis and disassembled as cells enter S phase. Post-translationally, multi-mono-ubiquitinated by OBI1; ubiquitination is important for efficient DNA replication origin site activation. Ubiquitination levels are low in mitotic and early G1-phAse cells and are induced in late G1-/early S-phase, peaking in S-phase and decrease toward the end of the cell cycle.

Its subcellular location is the nucleus. The protein resides in the chromosome. Its function is as follows. Component of the origin recognition complex (ORC) that binds origins of replication. DNA-binding is ATP-dependent. The specific DNA sequences that define origins of replication have not been identified yet. ORC is required to assemble the pre-replication complex necessary to initiate DNA replication. Binds histone H3 and H4 trimethylation marks H3K9me3, H3K27me3 and H4K20me3. The protein is Origin recognition complex subunit 3 (ORC3) of Homo sapiens (Human).